The chain runs to 122 residues: Large ribosomal subunit protein uL14 (122 aa).

Belongs to the universal ribosomal protein uL14 family. In terms of assembly, part of the 50S ribosomal subunit. Forms a cluster with proteins L3 and L19. In the 70S ribosome, L14 and L19 interact and together make contacts with the 16S rRNA in bridges B5 and B8.

Its function is as follows. Binds to 23S rRNA. Forms part of two intersubunit bridges in the 70S ribosome. This is Large ribosomal subunit protein uL14 from Rhodospirillum rubrum (strain ATCC 11170 / ATH 1.1.1 / DSM 467 / LMG 4362 / NCIMB 8255 / S1).